Here is a 436-residue protein sequence, read N- to C-terminus: Xylose isomerase (436 aa).

Residues H100 and D103 contribute to the active site. 7 residues coordinate Mg(2+): E231, E267, H270, D295, D306, D308, and D338.

This sequence belongs to the xylose isomerase family. Homotetramer. Mg(2+) serves as cofactor.

The protein resides in the cytoplasm. It carries out the reaction alpha-D-xylose = alpha-D-xylulofuranose. In Rhizobium etli (strain CIAT 652), this protein is Xylose isomerase.